We begin with the raw amino-acid sequence, 289 residues long: Phosphatidylserine decarboxylase proenzyme (289 aa).

Catalysis depends on charge relay system; for autoendoproteolytic cleavage activity residues Asp-89, His-146, and Ser-252. Residue Ser-252 is the Schiff-base intermediate with substrate; via pyruvic acid; for decarboxylase activity of the active site. A Pyruvic acid (Ser); by autocatalysis modification is found at Ser-252.

It belongs to the phosphatidylserine decarboxylase family. PSD-B subfamily. Prokaryotic type I sub-subfamily. As to quaternary structure, heterodimer of a large membrane-associated beta subunit and a small pyruvoyl-containing alpha subunit. The cofactor is pyruvate. Is synthesized initially as an inactive proenzyme. Formation of the active enzyme involves a self-maturation process in which the active site pyruvoyl group is generated from an internal serine residue via an autocatalytic post-translational modification. Two non-identical subunits are generated from the proenzyme in this reaction, and the pyruvate is formed at the N-terminus of the alpha chain, which is derived from the carboxyl end of the proenzyme. The autoendoproteolytic cleavage occurs by a canonical serine protease mechanism, in which the side chain hydroxyl group of the serine supplies its oxygen atom to form the C-terminus of the beta chain, while the remainder of the serine residue undergoes an oxidative deamination to produce ammonia and the pyruvoyl prosthetic group on the alpha chain. During this reaction, the Ser that is part of the protease active site of the proenzyme becomes the pyruvoyl prosthetic group, which constitutes an essential element of the active site of the mature decarboxylase.

Its subcellular location is the cell membrane. It catalyses the reaction a 1,2-diacyl-sn-glycero-3-phospho-L-serine + H(+) = a 1,2-diacyl-sn-glycero-3-phosphoethanolamine + CO2. The protein operates within phospholipid metabolism; phosphatidylethanolamine biosynthesis; phosphatidylethanolamine from CDP-diacylglycerol: step 2/2. Its function is as follows. Catalyzes the formation of phosphatidylethanolamine (PtdEtn) from phosphatidylserine (PtdSer). The protein is Phosphatidylserine decarboxylase proenzyme of Shewanella sp. (strain W3-18-1).